The sequence spans 373 residues: Histidinol-phosphate aminotransferase (373 aa).

At Lys229 the chain carries N6-(pyridoxal phosphate)lysine.

The protein belongs to the class-II pyridoxal-phosphate-dependent aminotransferase family. Histidinol-phosphate aminotransferase subfamily. Requires pyridoxal 5'-phosphate as cofactor.

It carries out the reaction L-histidinol phosphate + 2-oxoglutarate = 3-(imidazol-4-yl)-2-oxopropyl phosphate + L-glutamate. It functions in the pathway amino-acid biosynthesis; L-histidine biosynthesis; L-histidine from 5-phospho-alpha-D-ribose 1-diphosphate: step 7/9. This is Histidinol-phosphate aminotransferase (hisC) from Methanothermobacter thermautotrophicus (strain ATCC 29096 / DSM 1053 / JCM 10044 / NBRC 100330 / Delta H) (Methanobacterium thermoautotrophicum).